Here is a 147-residue protein sequence, read N- to C-terminus: Large ribosomal subunit protein bL9 (147 aa).

This sequence belongs to the bacterial ribosomal protein bL9 family.

Its function is as follows. Binds to the 23S rRNA. The polypeptide is Large ribosomal subunit protein bL9 (Mycoplasma capricolum subsp. capricolum (strain California kid / ATCC 27343 / NCTC 10154)).